We begin with the raw amino-acid sequence, 439 residues long: Ribosomal protein uS12 methylthiotransferase RimO (439 aa).

The MTTase N-terminal domain occupies 6–116; it reads GKVGFVSLGC…VMNQVHQVAP (111 aa). [4Fe-4S] cluster contacts are provided by Cys15, Cys51, Cys80, Cys148, Cys152, and Cys155. Residues 134–371 enclose the Radical SAM core domain; it reads LTPKHYAYLK…MEVQQRISAS (238 aa). One can recognise a TRAM domain in the interval 374–439; that stretch reads QAKIGKRMDV…DEYDLWGRPV (66 aa).

This sequence belongs to the methylthiotransferase family. RimO subfamily. Requires [4Fe-4S] cluster as cofactor.

It is found in the cytoplasm. It carries out the reaction L-aspartate(89)-[ribosomal protein uS12]-hydrogen + (sulfur carrier)-SH + AH2 + 2 S-adenosyl-L-methionine = 3-methylsulfanyl-L-aspartate(89)-[ribosomal protein uS12]-hydrogen + (sulfur carrier)-H + 5'-deoxyadenosine + L-methionine + A + S-adenosyl-L-homocysteine + 2 H(+). Functionally, catalyzes the methylthiolation of an aspartic acid residue of ribosomal protein uS12. In Hahella chejuensis (strain KCTC 2396), this protein is Ribosomal protein uS12 methylthiotransferase RimO.